The primary structure comprises 292 residues: Glutamyl-Q tRNA(Asp) synthetase (292 aa).

L-glutamate contacts are provided by residues 11–15 (RFAPS) and E47. Residues 14-24 (PSPTGPLHFGS) carry the 'HIGH' region motif. 4 residues coordinate Zn(2+): C103, C105, Y116, and C120. The L-glutamate site is built by Y173 and R191. The short motif at 229–233 (KLSKQ) is the 'KMSKS' region element. Position 232 (K232) interacts with ATP.

The protein belongs to the class-I aminoacyl-tRNA synthetase family. GluQ subfamily. Zn(2+) is required as a cofactor.

In terms of biological role, catalyzes the tRNA-independent activation of glutamate in presence of ATP and the subsequent transfer of glutamate onto a tRNA(Asp). Glutamate is transferred on the 2-amino-5-(4,5-dihydroxy-2-cyclopenten-1-yl) moiety of the queuosine in the wobble position of the QUC anticodon. In Acinetobacter baylyi (strain ATCC 33305 / BD413 / ADP1), this protein is Glutamyl-Q tRNA(Asp) synthetase.